The primary structure comprises 283 residues: Lectin-like protein At1g53080 (283 aa).

The signal sequence occupies residues 1–23 (MQIHKLCIFVLFISLLSSKTISA). Residues 24-277 (VKFNFNRFDG…RHDIWSWSFE (254 aa)) form a legume-lectin like region. 2 N-linked (GlcNAc...) asparagine glycosylation sites follow: Asn84 and Asn138. Ser247 carries the phosphoserine modification.

The protein belongs to the leguminous lectin family.

It is found in the secreted. The protein resides in the extracellular space. Its subcellular location is the apoplast. This chain is Lectin-like protein At1g53080, found in Arabidopsis thaliana (Mouse-ear cress).